A 136-amino-acid chain; its full sequence is Cytochrome b5 (136 aa).

One can recognise a Cytochrome b5 heme-binding domain in the interval 5 to 81 (TKVFTLAEVS…LDEYYVGDID (77 aa)). 2 residues coordinate heme: His-40 and His-64. Residues 107 to 127 (FVVKLLQFLVPLIILGVAFGI) traverse the membrane as a helical segment.

The protein belongs to the cytochrome b5 family. In terms of tissue distribution, is highly expressed in developing seeds, moderately expressed in flowers, and is expressed at low levels in the leaf.

It localises to the endoplasmic reticulum membrane. It is found in the microsome membrane. In terms of biological role, cytochrome b5 is a membrane bound hemoprotein which function as an electron carrier for several membrane bound oxygenases. May play a key role in the modification by desaturation of fatty acids in the endoplasmic reticulum, which in the developing seed is utilized for membrane synthesis and in the developmentally regulated production of large amounts of storage lipids. Is involved in the reduction of cytochrome P-450 and may therefore be involved in flavonoid biosynthesis in the petals. The sequence is that of Cytochrome b5 from Nicotiana tabacum (Common tobacco).